Reading from the N-terminus, the 865-residue chain is Aconitate hydratase B (865 aa).

Residues Arg191, 244–246, 414–416, and Ser498 contribute to the substrate site; these read SSR and QDT. The [4Fe-4S] cluster site is built by Cys710, Cys769, and Cys772. The substrate site is built by Arg791 and Arg796.

The protein belongs to the aconitase/IPM isomerase family. In terms of assembly, monomer. AcnB can also form a homodimer. The monomer-homodimer transition is dependent on iron availability and the carboxymethylation of C-273 inhibits the dimer formation. It depends on [4Fe-4S] cluster as a cofactor.

It catalyses the reaction citrate = D-threo-isocitrate. The catalysed reaction is (2S,3R)-3-hydroxybutane-1,2,3-tricarboxylate = 2-methyl-cis-aconitate + H2O. Its pathway is organic acid metabolism; propanoate degradation. The protein operates within carbohydrate metabolism; tricarboxylic acid cycle; isocitrate from oxaloacetate: step 2/2. Functionally, involved in the catabolism of short chain fatty acids (SCFA) via the tricarboxylic acid (TCA)(acetyl degradation route) and the 2-methylcitrate cycle I (propionate degradation route). Catalyzes the reversible isomerization of citrate to isocitrate via cis-aconitate. Also catalyzes the hydration of 2-methyl-cis-aconitate to yield (2R,3S)-2-methylisocitrate. The apo form of AcnB functions as a RNA-binding regulatory protein. During oxidative stress inactive AcnB apo-enzyme without iron sulfur clusters binds the acnB mRNA 3' UTRs (untranslated regions), stabilizes acnB mRNA and increases AcnB synthesis, thus mediating a post-transcriptional positive autoregulatory switch. AcnB also decreases the stability of the sodA transcript. This is Aconitate hydratase B from Escherichia coli (strain K12).